Here is a 552-residue protein sequence, read N- to C-terminus: Chaperonin GroEL 1 (552 aa).

ATP contacts are provided by residues 30 to 33, lysine 51, 87 to 91, glycine 415, 479 to 481, and aspartate 495; these read TLGP, DGTTT, and NAA.

It belongs to the chaperonin (HSP60) family. In terms of assembly, forms a cylinder of 14 subunits composed of two heptameric rings stacked back-to-back. Interacts with the co-chaperonin GroES.

The protein resides in the cytoplasm. The catalysed reaction is ATP + H2O + a folded polypeptide = ADP + phosphate + an unfolded polypeptide.. Its function is as follows. Together with its co-chaperonin GroES, plays an essential role in assisting protein folding. The GroEL-GroES system forms a nano-cage that allows encapsulation of the non-native substrate proteins and provides a physical environment optimized to promote and accelerate protein folding. This is Chaperonin GroEL 1 from Albidiferax ferrireducens (strain ATCC BAA-621 / DSM 15236 / T118) (Rhodoferax ferrireducens).